Here is a 92-residue protein sequence, read N- to C-terminus: Small ribosomal subunit protein uS19 (92 aa).

It belongs to the universal ribosomal protein uS19 family.

Functionally, protein S19 forms a complex with S13 that binds strongly to the 16S ribosomal RNA. The polypeptide is Small ribosomal subunit protein uS19 (Corynebacterium urealyticum (strain ATCC 43042 / DSM 7109)).